The sequence spans 243 residues: 1-(5-phosphoribosyl)-5-[(5-phosphoribosylamino)methylideneamino] imidazole-4-carboxamide isomerase (243 aa).

Asp-10 (proton acceptor) is an active-site residue. Asp-129 functions as the Proton donor in the catalytic mechanism.

This sequence belongs to the HisA/HisF family.

It localises to the cytoplasm. It catalyses the reaction 1-(5-phospho-beta-D-ribosyl)-5-[(5-phospho-beta-D-ribosylamino)methylideneamino]imidazole-4-carboxamide = 5-[(5-phospho-1-deoxy-D-ribulos-1-ylimino)methylamino]-1-(5-phospho-beta-D-ribosyl)imidazole-4-carboxamide. Its pathway is amino-acid biosynthesis; L-histidine biosynthesis; L-histidine from 5-phospho-alpha-D-ribose 1-diphosphate: step 4/9. The chain is 1-(5-phosphoribosyl)-5-[(5-phosphoribosylamino)methylideneamino] imidazole-4-carboxamide isomerase from Saccharopolyspora erythraea (strain ATCC 11635 / DSM 40517 / JCM 4748 / NBRC 13426 / NCIMB 8594 / NRRL 2338).